Consider the following 181-residue polypeptide: Crustacyanin-A1 subunit (181 aa).

3 cysteine pairs are disulfide-bonded: Cys-12–Cys-121, Cys-51–Cys-173, and Cys-117–Cys-150.

It belongs to the calycin superfamily. Lipocalin family. Oligomer; Can form dimers (beta-crustacyanin); or complexes of 16 subunits (alpha-crustacyanin). There are five types of subunits: A1, A2, A3, C1 and C2. Found in the carapace.

Its subcellular location is the secreted. The protein resides in the extracellular space. Functionally, binds the carotenoid astaxanthin (AXT) which provides the blue coloration to the carapace of the lobster. This is Crustacyanin-A1 subunit from Homarus gammarus (European lobster).